Here is a 371-residue protein sequence, read N- to C-terminus: MDLPGGHLAVVLFLFVLVSMSTENNIIRWCTVSDAEDQKCLDLAGNATARNLRGQLVCVRGQSPTDCMKQIKNGTADASTMYADEIYTAGFCYGLDVAVGESYNGVDGINYYVVALARTSSSDLSLLEMHERSSCHPGMRTTVGWTVPIGFLVNTSQISVDVQCNFPHAVGDFFGYSCVPGVKDPEHDPKGNNPRNLCEACIGDENDRHICANNPRERHFGEAGALRCVAENLGDVAFVKHTTVFDNMQGKNQESWALDLELEDLKLLCPDGSEANLFQHESCHLAVVPTNAVVVRLEDKCRVYKFLERVQNAFGNTTEGFSLFSSVNYGQPDVLFSDSTKKLLRVMGTYTSWLGPSYTTILRAFECEGLC.

The signal sequence occupies residues 1 to 21 (MDLPGGHLAVVLFLFVLVSMS). In terms of domain architecture, Transferrin-like spans 27–367 (IRWCTVSDAE…YTTILRAFEC (341 aa)).

Interacts with OTOL1.

It is found in the secreted. Required for normal otolith growth and deposition of otolin-1 in the otolith. In Danio rerio (Zebrafish), this protein is Otolith matrix protein 1 (otomp).